The primary structure comprises 142 residues: Small heat shock protein IbpB (142 aa).

A sHSP domain is found at 26 to 137; that stretch reads SGESQSFPPY…PPQRIAINER (112 aa).

The protein belongs to the small heat shock protein (HSP20) family. Homodimer. Forms homomultimers of about 100-150 subunits at optimal growth temperatures. Conformation changes to oligomers at high temperatures or high ionic concentrations. The decrease in size of the multimers is accompanied by an increase in chaperone activity.

It localises to the cytoplasm. Functionally, associates with aggregated proteins, together with IbpA, to stabilize and protect them from irreversible denaturation and extensive proteolysis during heat shock and oxidative stress. Aggregated proteins bound to the IbpAB complex are more efficiently refolded and reactivated by the ATP-dependent chaperone systems ClpB and DnaK/DnaJ/GrpE. Its activity is ATP-independent. The sequence is that of Small heat shock protein IbpB from Salmonella typhi.